The sequence spans 366 residues: Pectinesterase A (366 aa).

Positions 1-24 (MLKTISGTLALSLIIAASVHQAQA) are cleaved as a signal peptide. Residues Thr-109 and Gln-153 each contribute to the substrate site. The Proton donor role is filled by Asp-178. A disulfide bridge links Cys-192 with Cys-212. Catalysis depends on Asp-199, which acts as the Nucleophile. Substrate contacts are provided by Arg-219, Asn-226, Tyr-230, Arg-267, Trp-269, and Thr-272.

Belongs to the pectinesterase family. Monomer.

The protein resides in the secreted. It carries out the reaction [(1-&gt;4)-alpha-D-galacturonosyl methyl ester](n) + n H2O = [(1-&gt;4)-alpha-D-galacturonosyl](n) + n methanol + n H(+). It participates in glycan metabolism; pectin degradation; 2-dehydro-3-deoxy-D-gluconate from pectin: step 1/5. Its function is as follows. Catalyzes the first step in maceration and soft-rotting of plant tissue. The polypeptide is Pectinesterase A (Dickeya dadantii (strain 3937) (Erwinia chrysanthemi (strain 3937))).